We begin with the raw amino-acid sequence, 1374 residues long: Mitogen-activated protein kinase kinase kinase 5 (1374 aa).

Positions 68–87 (PAATSSSSATRGRGSSVGGG) are disordered. Residues 69 to 81 (AATSSSSATRGRG) are compositionally biased toward low complexity. 2 positions are modified to asymmetric dimethylarginine; by PRMT1: arginine 78 and arginine 80. Serine 83 is modified (phosphoserine; by PIM1 and PKB/AKT1). Residues 649 to 1374 (MVNTITEEKG…AIIDFRNKQT (726 aa)) are interaction with PPIA/CYPA. Positions 680-938 (NGDRVVLGKG…ANDLLVDEFL (259 aa)) constitute a Protein kinase domain. ATP contacts are provided by residues 686–694 (LGKGTYGIV) and lysine 709. Tyrosine 718 is modified (phosphotyrosine). Aspartate 803 functions as the Proton acceptor in the catalytic mechanism. Position 813 is a phosphothreonine; by autocatalysis (threonine 813). Residue threonine 838 is modified to Phosphothreonine; by autocatalysis, MELK and MAP3K6. Residue threonine 842 is modified to Phosphothreonine; by autocatalysis. A Phosphoserine modification is found at serine 958. Serine 966 carries the post-translational modification Phosphoserine; by autocatalysis. Serine 1029 and serine 1033 each carry phosphoserine. The interval 1182–1209 (SESDTADQEDLDVEDDHEEQPSNQTVRR) is disordered. Residues 1185–1199 (DTADQEDLDVEDDHE) are compositionally biased toward acidic residues. Positions 1245-1285 (LGRMKIETNRLLEELVRKEKELQALLHRAIEEKDQEIKHLK) form a coiled coil.

The protein belongs to the protein kinase superfamily. STE Ser/Thr protein kinase family. MAP kinase kinase kinase subfamily. In terms of assembly, homodimer when inactive. Binds both upstream activators and downstream substrates in multimolecular complexes. Part of a cytoplasmic complex made of HIPK1, DAB2IP and MAP3K5 in response to TNF. This complex formation promotes MAP3K5-JNK activation and subsequent apoptosis. Interacts with SOCS1 which recognizes phosphorylation of Tyr-718 and induces MAP3K5/ASK1 degradation in endothelial cells. Interacts with the 14-3-3 family proteins such as YWHAB, YWHAE, YWHAQ, YWHAH, YWHAZ and SFN. Interacts with ARRB2, BIRC2, DAB2IP, IGF1R, MAP3K6/ASK2, PGAM5, PIM1, PPP5C, SOCS1, STUB1, TRAF2, TRAF6 and TXN. Interacts with ERN1 in a TRAF2-dependent manner. Interacts with calcineurin subunit PPP3R1. Interacts with PPM1L. Interacts (via N-terminus) with RAF1 and this interaction inhibits the proapoptotic function of MAP3K5. Interacts with DAB2IP (via N-terminus C2 domain); the interaction occurs in a TNF-alpha-dependent manner. Interacts with DUSP13A; may positively regulate apoptosis. Interacts with DAXX. Interacts with RC3H2. Interacts with PPIA/CYPA. Interacts with PRMT1; the interaction results in MAP3K5 methylation by PRMT1 which inhibits MAP3K5 activation. Interacts with TRAF2; the interaction is inhibited by PRMT1. Interacts with TRIM48. As to quaternary structure, (Microbial infection) Interacts with HIV-1 Nef; this interaction inhibits MAP3K5 signaling. The cofactor is Mg(2+). Phosphorylated at Thr-838 through autophosphorylation and by MAP3K6/ASK2 which leads to activation. Thr-838 is dephosphorylated by PPP5C. Ser-83 and Ser-1033 are inactivating phosphorylation sites, the former of which is phosphorylated by AKT1. Phosphorylated at Ser-966 which induces association of MAP3K5/ASK1 with the 14-3-3 family proteins and suppresses MAP3K5/ASK1 activity. Calcineurin (CN) dephosphorylates this site. Also dephosphorylated and activated by PGAM5. Phosphorylation at Ser-966 in response to oxidative stress is negatively regulated by PPIA/CYPA. Post-translationally, ubiquitinated. Tumor necrosis factor (TNF) induces TNFR2-dependent ubiquitination, leading to proteasomal degradation. Ubiquitinated by RC3H2 in a TRIM48-dependent manner. In terms of processing, methylation at Arg-78 and Arg-80 by PRMT1 promotes association of MAP3K5 with thioredoxin and negatively regulates MAP3K5 association with TRAF2, inhibiting MAP3K5 activation. Methylation is blocked by ubiquitination of PRMT1 by TRIM48. Abundantly expressed in heart and pancreas.

The protein localises to the cytoplasm. It is found in the endoplasmic reticulum. It catalyses the reaction L-seryl-[protein] + ATP = O-phospho-L-seryl-[protein] + ADP + H(+). The enzyme catalyses L-threonyl-[protein] + ATP = O-phospho-L-threonyl-[protein] + ADP + H(+). Activated by various stressors, including oxidative stress, endoplasmic reticulum stress, and calcium overload, as well as by receptor-mediated inflammatory signals, such as the tumor necrosis factor (TNF) and lipopolysaccharide (LPS). Homophilic association of MAP3K5/ASK1 through the C-terminal coiled-coil domains and the heteromeric complex formation of MAP3K5/ASK1 with the reduced form of thioredoxin (TXN), constitutes an inactive form of the kinase. Upon ROS-induced dissociation of TXN from MAP3K5/ASK1, TRAF2 and TRAF6 are reciprocally recruited to MAP3K5/ASK1 and form the active MAP3K5/ASK1 signalosome, in which TRAF2 and TRAF6 appear to facilitate the active configuration of MAP3K5/ASK1. MAP3K5/ASK1 activity is also regulated through several phosphorylation and dephosphorylation events. Thr-838 is an activating phosphorylation site that is autophosphorylated and phosphorylated by MAP3K6/ASK2 and dephosphorylated by PPP5C. Ser-83 and Ser-1033 are inactivating phosphorylation sites, the former of which is phosphorylated by AKT1. Phosphorylation of Ser-966 induces association of MAP3K5/ASK1 with the 14-3-3 family proteins, which suppresses MAP3K5/ASK1 activity. Calcium/calmodulin-activated protein phosphatase calcineurin (PPP3CA) has been shown to directly dephosphorylate this site. SOCS1 binds to ASK1 by recognizing phosphorylation of Tyr-718 and induces MAP3K5/ASK1 degradation in endothelial cells. Also dephosphorylated and activated by PGAM5. Contains an N-terminal autoinhibitory domain. Once activated targeted for proteasomal degradation by RC3H2-mediated ubiquitination. Its function is as follows. Serine/threonine kinase which acts as an essential component of the MAP kinase signal transduction pathway. Plays an important role in the cascades of cellular responses evoked by changes in the environment. Mediates signaling for determination of cell fate such as differentiation and survival. Plays a crucial role in the apoptosis signal transduction pathway through mitochondria-dependent caspase activation. MAP3K5/ASK1 is required for the innate immune response, which is essential for host defense against a wide range of pathogens. Mediates signal transduction of various stressors like oxidative stress as well as by receptor-mediated inflammatory signals, such as the tumor necrosis factor (TNF) or lipopolysaccharide (LPS). Once activated, acts as an upstream activator of the MKK/JNK signal transduction cascade and the p38 MAPK signal transduction cascade through the phosphorylation and activation of several MAP kinase kinases like MAP2K4/SEK1, MAP2K3/MKK3, MAP2K6/MKK6 and MAP2K7/MKK7. These MAP2Ks in turn activate p38 MAPKs and c-jun N-terminal kinases (JNKs). Both p38 MAPK and JNKs control the transcription factors activator protein-1 (AP-1). The protein is Mitogen-activated protein kinase kinase kinase 5 (MAP3K5) of Homo sapiens (Human).